The chain runs to 257 residues: AN1-type zinc finger protein 2B (257 aa).

2 consecutive AN1-type zinc fingers follow at residues 4–52 (PDLG…QKDI) and 94–142 (KIFT…HPTS). Residues Cys-10, Cys-15, Cys-25, Cys-28, Cys-33, His-36, His-42, Cys-44, Cys-100, Cys-105, Cys-115, Cys-118, Cys-123, His-126, His-132, and Cys-134 each coordinate Zn(2+). The segment at 141–151 (TSRAGLAAISR) is VCP/p97-interacting motif (VIM). Positions 153–187 (QAVASTSTVPSPSQTMPSCTSPSRATTRSPSWTAP) are disordered. Polar residues predominate over residues 155–171 (VASTSTVPSPSQTMPSC). Phosphoserine is present on residues Ser-163 and Ser-173. Low complexity predominate over residues 172-186 (TSPSRATTRSPSWTA). UIM domains follow at residues 197-216 (SEDE…TKPQ) and 221-240 (QEEE…AEYQ). Cys-254 carries the post-translational modification Cysteine methyl ester. Residue Cys-254 is the site of S-geranylgeranyl cysteine attachment. The CAAX motif signature appears at 254–257 (CSLC). A propeptide spans 255–257 (SLC) (removed in mature form).

As to quaternary structure, binds 'Lys-48'-linked polyubiquitin chains of ubiquitinated proteins. Associates with the proteasome complex; upon exposure to arsenite. Interacts (via VIM motif) with VCP; the interaction is direct. Interacts with BAG6. Interacts with IGF1R (nascent precursor form). Interacts with DERL1, FAF2, NPLOC4 and UFD1; probably through VCP. Post-translationally, phosphorylated by MAPK14. Phosphorylation has no effect on association with the proteasome complex.

The protein localises to the endoplasmic reticulum membrane. Functionally, plays a role in protein homeostasis by regulating both the translocation and the ubiquitin-mediated proteasomal degradation of nascent proteins at the endoplasmic reticulum. It is involved in the regulation of signal-mediated translocation of proteins into the endoplasmic reticulum. It also plays a role in the ubiquitin-mediated proteasomal degradation of proteins for which signal-mediated translocation to the endoplasmic reticulum has failed. May therefore function in the endoplasmic reticulum stress-induced pre-emptive quality control, a mechanism that selectively attenuates the translocation of newly synthesized proteins into the endoplasmic reticulum and reroutes them to the cytosol for proteasomal degradation. By controlling the steady-state expression of the IGF1R receptor, indirectly regulates the insulin-like growth factor receptor signaling pathway. The protein is AN1-type zinc finger protein 2B of Homo sapiens (Human).